We begin with the raw amino-acid sequence, 500 residues long: Histidine--tRNA ligase (500 aa).

It belongs to the class-II aminoacyl-tRNA synthetase family. As to quaternary structure, homodimer.

The protein localises to the cytoplasm. It carries out the reaction tRNA(His) + L-histidine + ATP = L-histidyl-tRNA(His) + AMP + diphosphate + H(+). The protein is Histidine--tRNA ligase of Ruegeria sp. (strain TM1040) (Silicibacter sp.).